A 120-amino-acid chain; its full sequence is Phosphoribosyl-AMP cyclohydrolase (120 aa).

A Mg(2+)-binding site is contributed by D75. C76 serves as a coordination point for Zn(2+). The Mg(2+) site is built by D77 and D79. C92 and C99 together coordinate Zn(2+).

This sequence belongs to the PRA-CH family. As to quaternary structure, homodimer. It depends on Mg(2+) as a cofactor. The cofactor is Zn(2+).

It is found in the cytoplasm. The enzyme catalyses 1-(5-phospho-beta-D-ribosyl)-5'-AMP + H2O = 1-(5-phospho-beta-D-ribosyl)-5-[(5-phospho-beta-D-ribosylamino)methylideneamino]imidazole-4-carboxamide. The protein operates within amino-acid biosynthesis; L-histidine biosynthesis; L-histidine from 5-phospho-alpha-D-ribose 1-diphosphate: step 3/9. In terms of biological role, catalyzes the hydrolysis of the adenine ring of phosphoribosyl-AMP. The polypeptide is Phosphoribosyl-AMP cyclohydrolase (Methanosarcina acetivorans (strain ATCC 35395 / DSM 2834 / JCM 12185 / C2A)).